An 88-amino-acid polypeptide reads, in one-letter code: Phosphocarrier protein HPr (88 aa).

The region spanning 1–88 (MAQKTFTVTA…DTMSKEGLGE (88 aa)) is the HPr domain. The residue at position 12 (S12) is a Phosphoserine. Residue H15 is the Pros-phosphohistidine intermediate of the active site. Position 46 is a phosphoserine; by HPrK/P (S46).

The protein belongs to the HPr family.

The protein resides in the cytoplasm. Phosphorylation on Ser-46 inhibits the phosphoryl transfer from enzyme I to HPr. General (non sugar-specific) component of the phosphoenolpyruvate-dependent sugar phosphotransferase system (sugar PTS). This major carbohydrate active-transport system catalyzes the phosphorylation of incoming sugar substrates concomitantly with their translocation across the cell membrane. The phosphoryl group from phosphoenolpyruvate (PEP) is transferred to the phosphoryl carrier protein HPr by enzyme I. Phospho-HPr then transfers it to the PTS EIIA domain. Functionally, P-Ser-HPr interacts with the catabolite control protein A (CcpA), forming a complex that binds to DNA at the catabolite response elements cre, operator sites preceding a large number of catabolite-regulated genes. Thus, P-Ser-HPr is a corepressor in carbon catabolite repression (CCR), a mechanism that allows bacteria to coordinate and optimize the utilization of available carbon sources. P-Ser-HPr also plays a role in inducer exclusion, in which it probably interacts with several non-PTS permeases and inhibits their transport activity. The chain is Phosphocarrier protein HPr (ptsH) from Priestia megaterium (Bacillus megaterium).